Here is a 66-residue protein sequence, read N- to C-terminus: HEKELIEALQEVLKKLKSKRIPIYEKKYGQVPMCDAGEQCAVRKGARIGKLCDCPRGTSCNSFLLK.

2 disulfide bridges follow: Cys-34/Cys-52 and Cys-40/Cys-60.

It belongs to the CART family.

Its subcellular location is the secreted. In terms of biological role, satiety factor closely associated with the actions of leptin and neuropeptide y; this anorectic peptide inhibits both normal and starvation-induced feeding and completely blocks the feeding response induced by neuropeptide Y and regulated by leptin in the hypothalamus. The chain is Cocaine- and amphetamine-regulated transcript protein (CARTPT) from Sus scrofa (Pig).